Here is a 29-residue protein sequence, read N- to C-terminus: Cytochrome c oxidase subunit 7A1, mitochondrial (29 aa).

Basic and acidic residues predominate over residues 1–13 (LENRVAEKQKLFQ). The interval 1-29 (LENRVAEKQKLFQEDNGLPVHLKGGATDN) is disordered.

The protein belongs to the cytochrome c oxidase VIIa family. As to quaternary structure, component of the complex IV (CIV, cytochrome c oxidase), a multisubunit enzyme composed of 14 subunits. The complex is composed of a catalytic core of 3 subunits MT-CO1, MT-CO2 and MT-CO3, encoded in the mitochondrial DNA, and 11 supernumerary subunits COX4I1 (or COX4I2), COX5A, COX5B, COX6A2 (or COX6A1), COX6B1 (or COX6B2), COX6C, COX7A1 (or COX7A2), COX7B, COX7C, COX8B and NDUFA4, which are encoded in the nuclear genome. The complex exists as a monomer or a dimer and forms supercomplexes (SCs) in the inner mitochondrial membrane with NADH-ubiquinone oxidoreductase (complex I, CI) and ubiquinol-cytochrome c oxidoreductase (cytochrome b-c1 complex, complex III, CIII), resulting in different assemblies (supercomplex SCI(1)III(2)IV(1) and megacomplex MCI(2)III(2)IV(2)).

It is found in the mitochondrion inner membrane. Its pathway is energy metabolism; oxidative phosphorylation. Functionally, component of the mitochondrial respiratory complex IV (CIV, also named cytochrome c oxidase complex), the last enzyme in the mitochondrial electron transport chain which drives oxidative phosphorylation. The CIV complex is the component of the respiratory chain that catalyzes the reduction of oxygen to water. Acts as an assembly factor that specifically drives the homodimerization of CIV complexes, mediating the formation of mitochondrial respiratory supercomplexes (respirasomes) containing two CIV: supercomplxes with two molecules of CIV show improved activity. Despite being highly expressed in brown adipose tissue, not required for thermogenesis. The sequence is that of Cytochrome c oxidase subunit 7A1, mitochondrial (COX7A1) from Ovis aries (Sheep).